The chain runs to 73 residues: UPF0235 protein PCC7424_0673 (73 aa).

The protein belongs to the UPF0235 family.

The protein is UPF0235 protein PCC7424_0673 of Gloeothece citriformis (strain PCC 7424) (Cyanothece sp. (strain PCC 7424)).